The following is a 131-amino-acid chain: Hypocretin neuropeptide precursor (131 aa).

Residue Gln34 is modified to Pyrrolidone carboxylic acid. 2 disulfides stabilise this stretch: Cys39–Cys45 and Cys40–Cys47. Position 66 is a leucine amide (Leu66). A disordered region spans residues 104-131; the sequence is EPALRPCSGRRCPSEAASSVAPGGRSGV.

It belongs to the orexin family.

Its subcellular location is the rough endoplasmic reticulum. The protein resides in the cytoplasmic vesicle. The protein localises to the synapse. Functionally, neuropeptides that play a significant role in the regulation of food intake and sleep-wakefulness, possibly by coordinating the complex behavioral and physiologic responses of these complementary homeostatic functions. A broader role in the homeostatic regulation of energy metabolism, autonomic function, hormonal balance and the regulation of body fluids, is also suggested. Binds to orexin receptors HCRTR1/OX1R and HCRTR2/OX2R with a high affinity. Stimulates food intake. Modulates pituitary luteinizing hormone secretion in an ovarian steroid-dependent manner. Its function is as follows. Binds to orexin receptor HCRTR2/OX2R only. Stimulates food intake. Modulates pituitary luteinizing hormone secretion in an ovarian steroid-dependent manner. In Bos taurus (Bovine), this protein is Hypocretin neuropeptide precursor (HCRT).